A 181-amino-acid polypeptide reads, in one-letter code: ADP-ribosylation factor 1-like 2 (181 aa).

Gly-2 is lipidated: N-myristoyl glycine. The interval 3-16 (NVFGSLFKGLFGKK) is important for the stable binding to the membranes. GTP is bound by residues 24 to 32 (GLDAAGKTT), 126 to 129 (NKQD), and Ala-160.

The protein belongs to the small GTPase superfamily. Arf family.

The protein resides in the golgi apparatus membrane. It carries out the reaction GTP + H2O = GDP + phosphate + H(+). Alternates between an inactive GDP-bound form and an active GTP-bound form. Activated by a guanine nucleotide-exchange factor (GEF) and inactivated by GTPase-activating protein (GAP). In terms of biological role, small GTPase involved in protein trafficking between different compartments. Modulates vesicle budding and uncoating within the Golgi complex. In its GTP-bound form, triggers the recruitment of coatomer proteins to the Golgi membrane. The hydrolysis of ARF1-bound GTP, which is mediated by ARFGAPs proteins, is required for dissociation of coat proteins from Golgi membranes and vesicles. Involved in endoplasmic reticulum dynamics during embryogenesis. Also required for adult germline function. Plays a role in cell shedding during embryogenesis probably by promoting the endocytosis of cell adhesion molecules. During neurogenesis, involved in cell autonomous Q.p neuroblast asymmetric divisions that generate one precursor cell and one apoptotic cell, probably by controlling endocytosis. Plays a role in maintaining mitochondrial morphology. This chain is ADP-ribosylation factor 1-like 2 (arf-1.2), found in Caenorhabditis briggsae.